Consider the following 354-residue polypeptide: Chorismate synthase (354 aa).

Residues Arg48 and Arg54 each contribute to the NADP(+) site. Residues 125-127 (RSS), 238-239 (NA), Gly278, 293-297 (KPTSS), and Arg319 contribute to the FMN site.

Belongs to the chorismate synthase family. In terms of assembly, homotetramer. It depends on FMNH2 as a cofactor.

The catalysed reaction is 5-O-(1-carboxyvinyl)-3-phosphoshikimate = chorismate + phosphate. It functions in the pathway metabolic intermediate biosynthesis; chorismate biosynthesis; chorismate from D-erythrose 4-phosphate and phosphoenolpyruvate: step 7/7. In terms of biological role, catalyzes the anti-1,4-elimination of the C-3 phosphate and the C-6 proR hydrogen from 5-enolpyruvylshikimate-3-phosphate (EPSP) to yield chorismate, which is the branch point compound that serves as the starting substrate for the three terminal pathways of aromatic amino acid biosynthesis. This reaction introduces a second double bond into the aromatic ring system. The sequence is that of Chorismate synthase from Blochmanniella pennsylvanica (strain BPEN).